A 245-amino-acid polypeptide reads, in one-letter code: 1-(5-phosphoribosyl)-5-[(5-phosphoribosylamino)methylideneamino] imidazole-4-carboxamide isomerase (245 aa).

D10 functions as the Proton acceptor in the catalytic mechanism. Residue D135 is the Proton donor of the active site.

Belongs to the HisA/HisF family.

The protein localises to the cytoplasm. The enzyme catalyses 1-(5-phospho-beta-D-ribosyl)-5-[(5-phospho-beta-D-ribosylamino)methylideneamino]imidazole-4-carboxamide = 5-[(5-phospho-1-deoxy-D-ribulos-1-ylimino)methylamino]-1-(5-phospho-beta-D-ribosyl)imidazole-4-carboxamide. It participates in amino-acid biosynthesis; L-histidine biosynthesis; L-histidine from 5-phospho-alpha-D-ribose 1-diphosphate: step 4/9. The protein is 1-(5-phosphoribosyl)-5-[(5-phosphoribosylamino)methylideneamino] imidazole-4-carboxamide isomerase of Methanosarcina acetivorans (strain ATCC 35395 / DSM 2834 / JCM 12185 / C2A).